A 306-amino-acid polypeptide reads, in one-letter code: D-alanine--D-alanine ligase B (306 aa).

Positions 101–303 (KLLWQGAGLP…FSQLVVRILE (203 aa)) constitute an ATP-grasp domain. 134 to 189 (ISALGLPLIVKPSREGSSVGMTKVVEENALQGALSLAFQHDDEILIEKWLCGPEFT) provides a ligand contact to ATP. 3 residues coordinate Mg(2+): aspartate 257, glutamate 270, and asparagine 272.

Belongs to the D-alanine--D-alanine ligase family. In terms of assembly, monomer. Mg(2+) is required as a cofactor. It depends on Mn(2+) as a cofactor.

The protein localises to the cytoplasm. The catalysed reaction is 2 D-alanine + ATP = D-alanyl-D-alanine + ADP + phosphate + H(+). It functions in the pathway cell wall biogenesis; peptidoglycan biosynthesis. Its function is as follows. Cell wall formation. This is D-alanine--D-alanine ligase B (ddlB) from Salmonella typhimurium (strain LT2 / SGSC1412 / ATCC 700720).